Consider the following 206-residue polypeptide: MDIILLERIPRLGQMGDIVSVKDGYARNFLLPQGKALRANEANKKHFEIQRAQLEARNLERKSEAEKIAEKLDGKSFIVVRSAGETGQLYGSVSTRDISEIITSEGFSIGRNQVELNHPIKTIGLHTIMLSLHPEVQISVIINVARSASEAQRQAEGETLTSAEAIYDVRKELLAENQEETFAENQQKALAKEMNDNDANSINEEA.

A disordered region spans residues 182-206 (FAENQQKALAKEMNDNDANSINEEA). Positions 197 to 206 (NDANSINEEA) are enriched in polar residues.

It belongs to the bacterial ribosomal protein bL9 family.

Its function is as follows. Binds to the 23S rRNA. The polypeptide is Large ribosomal subunit protein bL9 (Bartonella henselae (strain ATCC 49882 / DSM 28221 / CCUG 30454 / Houston 1) (Rochalimaea henselae)).